A 215-amino-acid chain; its full sequence is 3-dehydroquinate dehydratase (215 aa).

3-dehydroquinate contacts are provided by residues 27 to 29 and Arg54; that span reads EVR. The active-site Proton donor/acceptor is the His112. The active-site Schiff-base intermediate with substrate is Lys139. The 3-dehydroquinate site is built by Arg176 and Gln198.

This sequence belongs to the type-I 3-dehydroquinase family. In terms of assembly, homodimer.

The enzyme catalyses 3-dehydroquinate = 3-dehydroshikimate + H2O. It functions in the pathway metabolic intermediate biosynthesis; chorismate biosynthesis; chorismate from D-erythrose 4-phosphate and phosphoenolpyruvate: step 3/7. Functionally, involved in the third step of the chorismate pathway, which leads to the biosynthesis of aromatic amino acids. Catalyzes the cis-dehydration of 3-dehydroquinate (DHQ) and introduces the first double bond of the aromatic ring to yield 3-dehydroshikimate. The sequence is that of 3-dehydroquinate dehydratase from Thermococcus onnurineus (strain NA1).